We begin with the raw amino-acid sequence, 111 residues long: Gene 81 protein (111 aa).

In Mycobacterium (Mycobacteriophage L5), this protein is Gene 81 protein (81).